A 30-amino-acid polypeptide reads, in one-letter code: Cyclotide cter-O (30 aa).

Positions 1 to 30 (GIPCGESCVFIPCITGIAGCSCKSKVCYRN) form a cross-link, cyclopeptide (Gly-Asn). 3 disulfides stabilise this stretch: Cys4–Cys20, Cys8–Cys22, and Cys13–Cys27.

Post-translationally, this is a cyclic peptide.

Its subcellular location is the secreted. In terms of biological role, probably participates in a plant defense mechanism. This Clitoria ternatea (Butterfly pea) protein is Cyclotide cter-O.